The primary structure comprises 363 residues: MSGLFSSVGRKGLFLIDPEKAHGLSVAALKSGFLPTCMVPHDPRLQQTVAGLVFPNPLGMAAGYDKNAEVPGPLLRLGFGFTEIGTVTPRAQSGNPKPRIFRLVEDEGVINRLGFNNEGHAAALERLTQARLRGIVGVNIGANKDSEDRIADYVQGIEAFYAVASYFTVNISSPNTPGLRDLQARESLAALLTAVLERRKTEAERLGKRIPIFLKIAPDLTEEGLDDVAEEALAHDLDGLIVSNTTLSREGLRPGPHRGEAGGLSGKPLFELSTTVLAKMRRRVGANLPIIGVGGVSSAETALEKVRAGADLVQLYSCMVYEGPGLPSAIVKGMSKLVAREGVETIRDLRDSAVDRWADRKLG.

Residues 62 to 66 (AGYDK) and T86 each bind FMN. Position 66 (K66) interacts with substrate. Position 111–115 (111–115 (NRLGF)) interacts with substrate. FMN is bound by residues N139 and N170. N170 contributes to the substrate binding site. The Nucleophile role is filled by S173. N175 contacts substrate. 2 residues coordinate FMN: K215 and S243. 244–245 (NT) lines the substrate pocket. Residues G266, G295, and 316 to 317 (YS) each bind FMN.

This sequence belongs to the dihydroorotate dehydrogenase family. Type 2 subfamily. In terms of assembly, monomer. FMN is required as a cofactor.

The protein resides in the cell membrane. It carries out the reaction (S)-dihydroorotate + a quinone = orotate + a quinol. It participates in pyrimidine metabolism; UMP biosynthesis via de novo pathway; orotate from (S)-dihydroorotate (quinone route): step 1/1. Its function is as follows. Catalyzes the conversion of dihydroorotate to orotate with quinone as electron acceptor. This chain is Dihydroorotate dehydrogenase (quinone), found in Agrobacterium fabrum (strain C58 / ATCC 33970) (Agrobacterium tumefaciens (strain C58)).